The following is a 333-amino-acid chain: Anthranilate phosphoribosyltransferase (333 aa).

Residues glycine 81, 84–85 (GD), threonine 89, 91–94 (NIST), 109–117 (KHGNRSVSS), and alanine 121 each bind 5-phospho-alpha-D-ribose 1-diphosphate. Glycine 81 is a binding site for anthranilate. A Mg(2+)-binding site is contributed by serine 93. Asparagine 112 provides a ligand contact to anthranilate. Arginine 167 contributes to the anthranilate binding site. Residues aspartate 225 and glutamate 226 each contribute to the Mg(2+) site.

The protein belongs to the anthranilate phosphoribosyltransferase family. Homodimer. It depends on Mg(2+) as a cofactor.

The enzyme catalyses N-(5-phospho-beta-D-ribosyl)anthranilate + diphosphate = 5-phospho-alpha-D-ribose 1-diphosphate + anthranilate. The protein operates within amino-acid biosynthesis; L-tryptophan biosynthesis; L-tryptophan from chorismate: step 2/5. In terms of biological role, catalyzes the transfer of the phosphoribosyl group of 5-phosphorylribose-1-pyrophosphate (PRPP) to anthranilate to yield N-(5'-phosphoribosyl)-anthranilate (PRA). The sequence is that of Anthranilate phosphoribosyltransferase from Haemophilus influenzae (strain 86-028NP).